The primary structure comprises 68 residues: U19-ctenitoxin-Pn1a (68 aa).

At Q1 the chain carries Pyrrolidone carboxylic acid. 5 cysteine pairs are disulfide-bonded: C8–C19, C13–C28, C18–C51, C38–C59, and C53–C65.

Expressed by the venom gland.

Its subcellular location is the secreted. Its function is as follows. Non-toxic to mice and insects. This is U19-ctenitoxin-Pn1a from Phoneutria nigriventer (Brazilian armed spider).